The following is a 693-amino-acid chain: MKTHRLNMTASLLIGISAFAVQAFASEPTVVPEQPPFPAQGKITYVSRDSILEFKALREYREPEWVTEKFVKAGKLPPVAERLPKEPMVFKAGNMPDGMGVYGDVMRHVIGGRPEGWNYSAGQTQGWGGIDIGMFECLTRTAPLFQVEADDMEPLPNLAKSWDWSEDGRKLTMHLIEGAKWSDGDPFDADDVMFYWEDNVLDSSVSPLNGATPETFGEGTTLKKIDQYTVEWTFKEAFPRQHLFAMAYGTFCPGPSHILKTKHPKYAGTTYNEYKNGFPAEYMNLPVMGAWVPVAYRPDDIIVLRRNPYYWKVDEAGNQLPYLNELHYKLSTWADRDVQAIAGSGDISNLEQPENFVESLKRAANESAPARLAFGPRVIGYNMHMNFSGNGWGDPDERAKAVRELNRNLDFRKAVTMAVDRKKLGEALVKGPFTAIYPGGLSSGTSFYDRNSTIYYPHDLEGAKVLLEKVGLKDTDGNGFVNFPAGKLGGRDVEIVLLVNSDYSTDRNLAEGMVGQMEKLGLRVVLNALDGKQRDAANYAGRFDWMIHRNTAEFASVVQNTPQLAPTGPRTSWHHRAPEGGEVDVMPHEQELVDIVNKFIASNDNDERTELMKQYQKVATTNVDTVGLTEYPGALIINKRFSNIPPGAPIFMFNWAEDTIIRERVFVAADKQGDYELYPEQLPGKPGESGPIN.

Residues 1 to 20 form the signal peptide; that stretch reads MKTHRLNMTASLLIGISAFA.

Belongs to the bacterial solute-binding protein 5 family.

Its subcellular location is the periplasm. Its function is as follows. Involved in the transport of alpha-galactosides. Required for the utilization of raffinose and melibiose. Probably acts as a periplasmic substrate-binding protein for a transport system. This Rhizobium meliloti (strain 1021) (Ensifer meliloti) protein is Periplasmic alpha-galactoside-binding protein.